Reading from the N-terminus, the 271-residue chain is Thiazole synthase (271 aa).

The active-site Schiff-base intermediate with DXP is K104. Residues G165, 192 to 193 (AG), and 214 to 215 (NT) contribute to the 1-deoxy-D-xylulose 5-phosphate site.

The protein belongs to the ThiG family. Homotetramer. Forms heterodimers with either ThiH or ThiS.

It localises to the cytoplasm. It catalyses the reaction [ThiS sulfur-carrier protein]-C-terminal-Gly-aminoethanethioate + 2-iminoacetate + 1-deoxy-D-xylulose 5-phosphate = [ThiS sulfur-carrier protein]-C-terminal Gly-Gly + 2-[(2R,5Z)-2-carboxy-4-methylthiazol-5(2H)-ylidene]ethyl phosphate + 2 H2O + H(+). Its pathway is cofactor biosynthesis; thiamine diphosphate biosynthesis. Functionally, catalyzes the rearrangement of 1-deoxy-D-xylulose 5-phosphate (DXP) to produce the thiazole phosphate moiety of thiamine. Sulfur is provided by the thiocarboxylate moiety of the carrier protein ThiS. In vitro, sulfur can be provided by H(2)S. The polypeptide is Thiazole synthase (Burkholderia lata (strain ATCC 17760 / DSM 23089 / LMG 22485 / NCIMB 9086 / R18194 / 383)).